The primary structure comprises 150 residues: Large ribosomal subunit protein uL15 (150 aa).

This sequence belongs to the universal ribosomal protein uL15 family. As to quaternary structure, part of the 50S ribosomal subunit.

Binds to the 23S rRNA. This is Large ribosomal subunit protein uL15 from Rickettsia typhi (strain ATCC VR-144 / Wilmington).